The following is a 331-amino-acid chain: UDP-GalNAc:beta-1,3-N-acetylgalactosaminyltransferase 1 (331 aa).

The Cytoplasmic portion of the chain corresponds to 1–20; it reads MAPAVLTAIPNRMSLRSLKW. The chain crosses the membrane as a helical; Signal-anchor for type II membrane protein span at residues 21 to 43; that stretch reads SLLLLSLLSFLVIWYLSLPHYNV. Residues 44 to 331 are Lumenal-facing; the sequence is IERVNWMYFY…VMLRNTTCHY (288 aa). 5 N-linked (GlcNAc...) asparagine glycosylation sites follow: Asn72, Asn154, Asn198, Asn212, and Asn326.

It belongs to the glycosyltransferase 31 family. It depends on Mg(2+) as a cofactor.

It is found in the golgi apparatus membrane. The enzyme catalyses a globoside Gb3Cer (d18:1(4E)) + UDP-N-acetyl-alpha-D-galactosamine = a globoside Gb4Cer (d18:1(4E)) + UDP + H(+). It participates in protein modification; protein glycosylation. Transfers N-acetylgalactosamine onto globotriaosylceramide. Plays a critical role in preimplantation stage embryonic development. This Rattus norvegicus (Rat) protein is UDP-GalNAc:beta-1,3-N-acetylgalactosaminyltransferase 1 (B3galnt1).